A 451-amino-acid polypeptide reads, in one-letter code: Serine--tRNA ligase (451 aa).

T258 to E260 contacts L-serine. ATP is bound at residue R289–E291. E312 lines the L-serine pocket. Residue E376–S379 coordinates ATP. Position 411 (S411) interacts with L-serine.

This sequence belongs to the class-II aminoacyl-tRNA synthetase family. Type-1 seryl-tRNA synthetase subfamily. Homodimer. The tRNA molecule binds across the dimer.

It localises to the cytoplasm. It carries out the reaction tRNA(Ser) + L-serine + ATP = L-seryl-tRNA(Ser) + AMP + diphosphate + H(+). The enzyme catalyses tRNA(Sec) + L-serine + ATP = L-seryl-tRNA(Sec) + AMP + diphosphate + H(+). It functions in the pathway aminoacyl-tRNA biosynthesis; selenocysteinyl-tRNA(Sec) biosynthesis; L-seryl-tRNA(Sec) from L-serine and tRNA(Sec): step 1/1. Catalyzes the attachment of serine to tRNA(Ser). Is also able to aminoacylate tRNA(Sec) with serine, to form the misacylated tRNA L-seryl-tRNA(Sec), which will be further converted into selenocysteinyl-tRNA(Sec). This chain is Serine--tRNA ligase, found in Bordetella bronchiseptica (strain ATCC BAA-588 / NCTC 13252 / RB50) (Alcaligenes bronchisepticus).